The chain runs to 146 residues: Phospholipase A2 (146 aa).

Residues 1 to 18 form the signal peptide; that stretch reads MAFLVFAFLTLMAVETYG. Cystine bridges form between Cys-44–Cys-137, Cys-46–Cys-62, Cys-61–Cys-117, Cys-67–Cys-144, Cys-68–Cys-110, Cys-77–Cys-103, and Cys-95–Cys-108. Residues Tyr-45, Gly-47, and Gly-49 each coordinate Ca(2+). His-65 is a catalytic residue. Asp-66 contacts Ca(2+). Residue Asn-85 is glycosylated (N-linked (GlcNAc...) asparagine). The active site involves Asp-111. Asn-126 carries N-linked (GlcNAc...) asparagine glycosylation.

Requires Ca(2+) as cofactor. Post-translationally, N-glycosylated. Glycosylated with mannose chains including Man2(GlcNAc), Man2(GlcNAc)2, Man2(GlcNAc)3, Man2(GlcNAc)4 and Man2(GlcNAc)5. Expressed by the skin glands (at protein level).

Its subcellular location is the secreted. The enzyme catalyses a 1,2-diacyl-sn-glycero-3-phosphocholine + H2O = a 1-acyl-sn-glycero-3-phosphocholine + a fatty acid + H(+). Functionally, PLA2 catalyzes the calcium-dependent hydrolysis of the 2-acyl groups in 3-sn-phosphoglycerides. In Pithecopus azureus (Orange-legged monkey tree frog), this protein is Phospholipase A2.